Reading from the N-terminus, the 235-residue chain is MGGQRHTMIDDAAQRRRLEAGLAEIGLALPPDRIDTLFAYLALLRKWNGVYNLTAIRHPDEMLTHHLLDSLAAVPALAEMARSSEVGGAARGRVLDVGSGGGMPGLPLAISCPDVSVLMVDIVQKKTAFLTQCRAQLGLSNAAAHWGPVERLEDPDKFAVITSRAFAELTDFVNLSGHLLAPHGRLIAMKGVYPQAELDRMEAAGLMAAWQVEEVRRLTVPGLDAERHLVLLSRK.

S-adenosyl-L-methionine contacts are provided by residues Gly98, Met103, 149 to 150 (VE), and Arg164.

This sequence belongs to the methyltransferase superfamily. RNA methyltransferase RsmG family.

The protein localises to the cytoplasm. The enzyme catalyses guanosine(527) in 16S rRNA + S-adenosyl-L-methionine = N(7)-methylguanosine(527) in 16S rRNA + S-adenosyl-L-homocysteine. In terms of biological role, specifically methylates the N7 position of guanine in position 527 of 16S rRNA. The chain is Ribosomal RNA small subunit methyltransferase G from Cupriavidus pinatubonensis (strain JMP 134 / LMG 1197) (Cupriavidus necator (strain JMP 134)).